The following is a 75-amino-acid chain: MYB-like transcription factor ETC3 (75 aa).

Residues 1–20 form a disordered region; the sequence is MDNHRRTKQPKTNSIVTSSS. A Myb-like domain is found at 34 to 71; that stretch reads SQEEEDLVSRMHKLVGDRWELIAGRIPGRTAGEIERFW.

As to expression, expressed in leaf epidermal cells, stomate guard cells in leaves, cotyledons and hypocotyls, inflorescences, developing seeds and siliques.

It is found in the nucleus. In terms of biological role, MYB-type transcription factor involved in epidermal cell fate specification. Acts as a negative regulator of trichome development, including endoreplication, by mediating lateral inhibition. Promotes the formation of hair developing cells in H position in root epidermis, probably by inhibiting non-hair cell formation. May have pleiotropic effects on flowering development and epidermal cell size through the regulation of endoreduplication. This chain is MYB-like transcription factor ETC3 (ETC3), found in Arabidopsis thaliana (Mouse-ear cress).